The following is a 147-amino-acid chain: Nucleoside diphosphate kinase (147 aa).

6 residues coordinate ATP: K9, F57, R85, T91, R102, and N112. The active-site Pros-phosphohistidine intermediate is the H115.

The protein belongs to the NDK family. Homotetramer. Requires Mg(2+) as cofactor.

The protein localises to the cytoplasm. The enzyme catalyses a 2'-deoxyribonucleoside 5'-diphosphate + ATP = a 2'-deoxyribonucleoside 5'-triphosphate + ADP. It catalyses the reaction a ribonucleoside 5'-diphosphate + ATP = a ribonucleoside 5'-triphosphate + ADP. Its function is as follows. Major role in the synthesis of nucleoside triphosphates other than ATP. The ATP gamma phosphate is transferred to the NDP beta phosphate via a ping-pong mechanism, using a phosphorylated active-site intermediate. The polypeptide is Nucleoside diphosphate kinase (Listeria monocytogenes serotype 4b (strain F2365)).